The chain runs to 461 residues: Cysteine--tRNA ligase (461 aa).

Cys30 contacts Zn(2+). Residues 32-42 carry the 'HIGH' region motif; sequence PTVYSYAHIGN. Zn(2+)-binding residues include Cys212, His237, and Glu241. A 'KMSKS' region motif is present at residues 270–274; sequence KMSKS. An ATP-binding site is contributed by Lys273.

It belongs to the class-I aminoacyl-tRNA synthetase family. As to quaternary structure, monomer. Requires Zn(2+) as cofactor.

It is found in the cytoplasm. It carries out the reaction tRNA(Cys) + L-cysteine + ATP = L-cysteinyl-tRNA(Cys) + AMP + diphosphate. The sequence is that of Cysteine--tRNA ligase from Maricaulis maris (strain MCS10) (Caulobacter maris).